We begin with the raw amino-acid sequence, 816 residues long: Chitin synthase 1 (816 aa).

The tract at residues Met-1–Lys-21 is disordered. Topologically, residues Met-1–Arg-32 are cytoplasmic. A helical membrane pass occupies residues Val-33–Thr-53. Residues Pro-54–Lys-63 are Extracellular-facing. A helical transmembrane segment spans residues Val-64–Met-84. At Asn-85 to Met-240 the chain is on the cytoplasmic side. The chain crosses the membrane as a helical span at residues Phe-241–Phe-261. The Extracellular portion of the chain corresponds to Tyr-262–Gly-697. Asn-319 and Asn-664 each carry an N-linked (GlcNAc...) asparagine glycan. The helical transmembrane segment at Thr-698–Ile-718 threads the bilayer. The Cytoplasmic segment spans residues Glu-719–Pro-720. The chain crosses the membrane as a helical span at residues Ala-721 to Ile-741. The Extracellular portion of the chain corresponds to Thr-742–Glu-745. Residues Ile-746–Leu-766 form a helical membrane-spanning segment. Over Pro-767–Lys-816 the chain is Cytoplasmic.

It belongs to the chitin synthase family. Class IV subfamily.

Its subcellular location is the cell membrane. The catalysed reaction is [(1-&gt;4)-N-acetyl-beta-D-glucosaminyl](n) + UDP-N-acetyl-alpha-D-glucosamine = [(1-&gt;4)-N-acetyl-beta-D-glucosaminyl](n+1) + UDP + H(+). Polymerizes chitin, a structural polymer of the cell wall and septum, by transferring the sugar moiety of UDP-GlcNAc to the non-reducing end of the growing chitin polymer. The chain is Chitin synthase 1 (CHS1) from Encephalitozoon cuniculi (strain GB-M1) (Microsporidian parasite).